Reading from the N-terminus, the 266-residue chain is DNA-directed RNA polymerase subunit Rpo3 (266 aa).

Residues Cys205, Cys208, and Cys211 each coordinate [3Fe-4S] cluster.

It belongs to the archaeal Rpo3/eukaryotic RPB3 RNA polymerase subunit family. In terms of assembly, part of the RNA polymerase complex. Requires [3Fe-4S] cluster as cofactor.

Its subcellular location is the cytoplasm. The catalysed reaction is RNA(n) + a ribonucleoside 5'-triphosphate = RNA(n+1) + diphosphate. DNA-dependent RNA polymerase (RNAP) catalyzes the transcription of DNA into RNA using the four ribonucleoside triphosphates as substrates. This Methanosarcina mazei (strain ATCC BAA-159 / DSM 3647 / Goe1 / Go1 / JCM 11833 / OCM 88) (Methanosarcina frisia) protein is DNA-directed RNA polymerase subunit Rpo3.